Here is a 656-residue protein sequence, read N- to C-terminus: Pumilio homology domain family member 6 (656 aa).

A disordered region spans residues 1 to 107 (MAPLTKKTNG…GGENGNHTEQ (107 aa)). Positions 13-23 (SAKEVSHSEKK) are enriched in basic and acidic residues. Serine 31, serine 34, and serine 35 each carry phosphoserine; by CK2. Phosphoserine is present on residues serine 34 and serine 35. Positions 52 to 89 (SDDDDLDDLSTSDSEAEEEADELDISDDSEEHENENEE) are enriched in acidic residues. Residues 90–107 (KEGKDKSEGGENGNHTEQ) are compositionally biased toward basic and acidic residues. A PUM-HD domain is found at 133–483 (RLRVKTPPLP…ELLSKFAPMF (351 aa)). Pumilio repeat units lie at residues 155-191 (ELSK…QIVD), 192-227 (ALKG…TIIN), 228-264 (ELHG…QMIK), 340-376 (ELLH…LILK), 377-413 (ALKN…KTFS), and 415-450 (TVKE…PIVK).

It belongs to the PUF6 family. In terms of assembly, component of the ASH1 mRNP composed of at least PUF6, SHE2, SHE3, SHE1 and the ASH1 mRNA. Interacts with SHE2 and FUN12. Phosphorylation by CK2 relieves translational repression activity.

It localises to the bud tip. Its subcellular location is the nucleus. It is found in the nucleolus. RNA-binding protein involved in post-transcriptional regulation. Component of the ASH1 mRNP which transports the ASH1 mRNA to the distal tip of the bud, where the ASH1 protein is translated and targeted to the daughter cell nucleus. Binds to the ASH1 3'-UTR containing the PUF consensus UUGU segment and represses its translation. This silencing of ASH1 mRNA is critical for asymmetric seggregation of ASH1 to the daughter cell nucleus. The sequence is that of Pumilio homology domain family member 6 (PUF6) from Saccharomyces cerevisiae (strain ATCC 204508 / S288c) (Baker's yeast).